Here is a 161-residue protein sequence, read N- to C-terminus: Globin CTT-VIIB-10 (161 aa).

A signal peptide spans 1-16; it reads MKFFAVLALCIVGAIA. Positions 18–161 constitute a Globin domain; the sequence is PLTADEASLV…NTFAIVVPRL (144 aa). The heme b site is built by histidine 76 and histidine 111.

This sequence belongs to the globin family. In terms of assembly, homodimer.

In Chironomus thummi thummi (Midge), this protein is Globin CTT-VIIB-10 (CTT-7B10).